The following is a 629-amino-acid chain: tRNA uridine 5-carboxymethylaminomethyl modification enzyme MnmG (629 aa).

An FAD-binding site is contributed by 13-18 (GGGHAG). An NAD(+)-binding site is contributed by 273 to 287 (GPRYCPSIEDKIHRF).

It belongs to the MnmG family. In terms of assembly, homodimer. Heterotetramer of two MnmE and two MnmG subunits. FAD serves as cofactor.

It is found in the cytoplasm. In terms of biological role, NAD-binding protein involved in the addition of a carboxymethylaminomethyl (cmnm) group at the wobble position (U34) of certain tRNAs, forming tRNA-cmnm(5)s(2)U34. The sequence is that of tRNA uridine 5-carboxymethylaminomethyl modification enzyme MnmG from Shewanella denitrificans (strain OS217 / ATCC BAA-1090 / DSM 15013).